The primary structure comprises 122 residues: uncharacterized protein (122 aa).

The next 3 membrane-spanning stretches (helical) occupy residues 21–40 (VWSWRRLFIFRVLNVVSIAI), 57–77 (YTHMAIPLSTCLFCLCLCICI), and 94–114 (LLFSVFHLVFSTIALSIYCIY).

It is found in the membrane. This is an uncharacterized protein from Saccharomyces cerevisiae (strain ATCC 204508 / S288c) (Baker's yeast).